The following is a 282-amino-acid chain: 2-dehydro-3-deoxyphosphooctonate aldolase (282 aa).

Belongs to the KdsA family.

It is found in the cytoplasm. It carries out the reaction D-arabinose 5-phosphate + phosphoenolpyruvate + H2O = 3-deoxy-alpha-D-manno-2-octulosonate-8-phosphate + phosphate. Its pathway is carbohydrate biosynthesis; 3-deoxy-D-manno-octulosonate biosynthesis; 3-deoxy-D-manno-octulosonate from D-ribulose 5-phosphate: step 2/3. It functions in the pathway bacterial outer membrane biogenesis; lipopolysaccharide biosynthesis. The chain is 2-dehydro-3-deoxyphosphooctonate aldolase from Shewanella baltica (strain OS223).